We begin with the raw amino-acid sequence, 130 residues long: Large ribosomal subunit protein uL14 (130 aa).

The protein belongs to the universal ribosomal protein uL14 family. As to quaternary structure, part of the 50S ribosomal subunit. Forms a cluster with proteins L3 and L19. In the 70S ribosome, L14 and L19 interact and together make contacts with the 16S rRNA in bridges B5 and B8.

Binds to 23S rRNA. Forms part of two intersubunit bridges in the 70S ribosome. In Helicobacter pylori (strain P12), this protein is Large ribosomal subunit protein uL14.